The chain runs to 285 residues: Nucleotide-binding protein HI_1146 (285 aa).

8-15 (GRSGAGKS) is an ATP binding site. 56 to 59 (DIRN) is a GTP binding site.

It belongs to the RapZ-like family.

Functionally, displays ATPase and GTPase activities. This is Nucleotide-binding protein HI_1146 from Haemophilus influenzae (strain ATCC 51907 / DSM 11121 / KW20 / Rd).